The chain runs to 321 residues: Glucokinase (321 aa).

8–13 contributes to the ATP binding site; it reads GDVGGT.

This sequence belongs to the bacterial glucokinase family.

It is found in the cytoplasm. The enzyme catalyses D-glucose + ATP = D-glucose 6-phosphate + ADP + H(+). The chain is Glucokinase from Shigella sonnei (strain Ss046).